A 759-amino-acid chain; its full sequence is Putative ATP-dependent DNA helicase YjcD (759 aa).

The tract at residues 68–121 (ACEPKPSKEGKKEDDQESGVIRLPKGKAIAADPSPAVTEWHRPRSIKPGTPFVP) is disordered. The segment covering 69–81 (CEPKPSKEGKKED) has biased composition (basic and acidic residues). In terms of domain architecture, UvrD-like helicase ATP-binding spans 134–413 (VGLNTDQLKA…IYLTANYRST (280 aa)). ATP-binding positions include 158 to 163 (GSGKTR) and R411. The region spanning 414–676 (HPIVSSADIV…QLMTIHRSKG (263 aa)) is the UvrD-like helicase C-terminal domain.

The protein belongs to the helicase family. UvrD subfamily.

It localises to the cytoplasm. The catalysed reaction is Couples ATP hydrolysis with the unwinding of duplex DNA by translocating in the 3'-5' direction.. It catalyses the reaction ATP + H2O = ADP + phosphate + H(+). Functionally, may be involved in the generation of recombinogenic substrates for the subsequent action of RecA. The chain is Putative ATP-dependent DNA helicase YjcD (yjcD) from Bacillus subtilis (strain 168).